Reading from the N-terminus, the 780-residue chain is ATP-dependent 6-phosphofructokinase, muscle type (780 aa).

The residue at position 2 (Thr-2) is an N-acetylthreonine. Residues Thr-2 to His-390 form an N-terminal catalytic PFK domain 1 region. Residues Gly-25, Arg-88–Cys-89, and Gly-118–Ser-121 each bind ATP. Mg(2+) is bound at residue Asp-119. Ser-133 carries the post-translational modification Phosphoserine. Substrate-binding positions include Ser-164–Asp-166, Arg-201, Met-208–Arg-210, Glu-264, Arg-292, and His-298–Arg-301. Asp-166 serves as the catalytic Proton acceptor. Residue Ser-377 is modified to Phosphoserine. Residues Val-391–His-401 form an interdomain linker region. Positions Thr-402 to Val-780 are C-terminal regulatory PFK domain 2. Beta-D-fructose 2,6-bisphosphate-binding positions include Arg-471 and Thr-528 to Asn-532. O-linked (GlcNAc) serine glycosylation occurs at Ser-530. Lys-557 carries the post-translational modification N6-(2-hydroxyisobutyryl)lysine. Residues Arg-566, Met-573–Gly-575, Glu-629, Arg-655, and His-661–Gln-664 each bind beta-D-fructose 2,6-bisphosphate. Phosphoserine is present on Ser-667. Position 735 (Arg-735) interacts with beta-D-fructose 2,6-bisphosphate. Ser-775 is subject to Phosphoserine.

The protein belongs to the phosphofructokinase type A (PFKA) family. ATP-dependent PFK group I subfamily. Eukaryotic two domain clade 'E' sub-subfamily. In terms of assembly, homo- and heterotetramers. Phosphofructokinase (PFK) enzyme functions as a tetramer composed of different combinations of 3 types of subunits, called PFKM (where M stands for Muscle), PFKL (Liver) and PFKP (Platelet). The composition of the PFK tetramer differs according to the tissue type it is present in. In muscles, it is composed of 4 PFKM subunits (also called M4). In the liver, the predominant form is a tetramer of PFKL subunits (L4). In erythrocytes, both PFKM and PFKL subunits randomly tetramerize to form M4, L4 and other combinations (ML3, M2L2, M3L). The kinetic and regulatory properties of the tetrameric enzyme are dependent on the subunit composition, hence can vary across tissues. Interacts (via C-terminus) with HK1 (via N-terminal spermatogenic cell-specific region). The cofactor is Mg(2+). GlcNAcylation decreases enzyme activity.

The protein resides in the cytoplasm. It catalyses the reaction beta-D-fructose 6-phosphate + ATP = beta-D-fructose 1,6-bisphosphate + ADP + H(+). It functions in the pathway carbohydrate degradation; glycolysis; D-glyceraldehyde 3-phosphate and glycerone phosphate from D-glucose: step 3/4. Its activity is regulated as follows. Allosterically activated by ADP, AMP, or fructose 2,6-bisphosphate, and allosterically inhibited by ATP or citrate. In terms of biological role, catalyzes the phosphorylation of D-fructose 6-phosphate to fructose 1,6-bisphosphate by ATP, the first committing step of glycolysis. The polypeptide is ATP-dependent 6-phosphofructokinase, muscle type (PFKM) (Homo sapiens (Human)).